Here is a 306-residue protein sequence, read N- to C-terminus: Aquaporin-1 (306 aa).

A compositionally biased stretch (polar residues) spans 1-23 (MASTHSSLTTVQNNANNKSNRTL). Positions 1-24 (MASTHSSLTTVQNNANNKSNRTLN) are disordered. Topologically, residues 1-59 (MASTHSSLTTVQNNANNKSNRTLNTERRLSMESSVFTLYNKAADELDTSQRSAFQACHR) are cytoplasmic. The helical transmembrane segment at 60-80 (EFLAEFIGTVILVLLTCGFCA) threads the bilayer. At 81 to 92 (EQTLHIEESKSW) the chain is on the extracellular side. A helical transmembrane segment spans residues 93–113 (LTSSFGSGLSVLIGICVSGHV). Residues 114 to 145 (SGAHLNPAVTIAFCIFSGFPIRKVPSYITAQL) lie on the Cytoplasmic side of the membrane. An NPA 1 motif is present at residues 119–121 (NPA). Residues 146–166 (LGAFAGAALLYIIIEPAIVQF) traverse the membrane as a helical segment. Over 167–192 (DGGQRYILGEKSTAGIFGTYPPLYVG) the chain is Extracellular. The chain crosses the membrane as a helical span at residues 193–213 (IGSAIASEIMGTAMLLLVIMV). Residues 214-226 (TGHPNNLPYKSAQ) lie on the Cytoplasmic side of the membrane. A helical membrane pass occupies residues 227 to 247 (GAMIALGITTISLCIGYTSGF). The Extracellular segment spans residues 248–278 (SLNPARDFGPRLFTAIAGWGFDVFKVYHYYA). An NPA 2 motif is present at residues 250 to 252 (NPA). A helical membrane pass occupies residues 279-299 (LVPMFAPILGGLVGLMLMMPF). The Cytoplasmic portion of the chain corresponds to 300-306 (SFLSVRA).

It belongs to the MIP/aquaporin (TC 1.A.8) family.

The protein resides in the cell membrane. The catalysed reaction is H2O(in) = H2O(out). Functionally, water channel required to facilitate the transport of water across membranes. Contributes to water uptake of spores during the early stages of spore germination. Aquaporins AQP1 and AQP2 act as extracellular pH sensors and enable the spores to hydrate under favorable conditions and to commence germination. Wounded vegetables and fruit present acidic pH, so the optimal pH range for germination is adapted to the relevant host pH. The chain is Aquaporin-1 from Rhizopus delemar (strain RA 99-880 / ATCC MYA-4621 / FGSC 9543 / NRRL 43880) (Mucormycosis agent).